A 272-amino-acid polypeptide reads, in one-letter code: Arylesterase (272 aa).

In terms of domain architecture, AB hydrolase-1 spans Lys-21 to Gly-253. Residue Trp-29 coordinates acetate. Ser-95 is an active-site residue. Met-96 is an acetate binding site. Active-site residues include Asp-223 and His-252.

Belongs to the AB hydrolase superfamily. Bacterial non-heme haloperoxidase / perhydrolase family. As to quaternary structure, dimer of trimers.

The catalysed reaction is a phenyl acetate + H2O = a phenol + acetate + H(+). The enzyme catalyses peracetic acid + H2O = acetate + H2O2 + H(+). It catalyses the reaction a percarboxylic acid + H2O = a carboxylate + H2O2 + H(+). Its function is as follows. Hydrolyzes phenolic esters, such as phenyl acetate, nitrophenyl acetate and naphtyl acetate. Can act on a wide range of esters, but reaction rate and enantioselectivity differ significantly depending on the substrate. Shows a preference for esters with small acyl groups. Also shows low perhydrolase activity, and catalyzes the reversible formation of peroxycarboxylic acids from carboxylic acids and hydrogen peroxide. In vitro, enzyme-generated peracetic acid oxidizes bromide ion to bromonium, which reacts with monochlorodimedone to form bromochlorodimedone. This is Arylesterase from Pseudomonas fluorescens.